Here is a 100-residue protein sequence, read N- to C-terminus: Small ribosomal subunit protein uS14c (100 aa).

The protein belongs to the universal ribosomal protein uS14 family. Part of the 30S ribosomal subunit.

The protein localises to the plastid. Its subcellular location is the chloroplast. Binds 16S rRNA, required for the assembly of 30S particles. This chain is Small ribosomal subunit protein uS14c, found in Pelargonium hortorum (Common geranium).